The primary structure comprises 867 residues: Heat shock 70 kDa protein 17 (867 aa).

Positions 1-24 are cleaved as a signal peptide; sequence MGKIFSWLVVLLSLISLVPVPSES. Composition is skewed to polar residues over residues 560-575 and 587-598; these read TIDSNTTTSTGNATDE and DAENSTASNTTA. 2 disordered regions span residues 560 to 607 and 829 to 867; these read TIDS…ASLG and PKPKPKIEKVTKTENTTKEEEQSKSSDEAAKEEESHDEL. Basic and acidic residues predominate over residues 833–867; it reads PKIEKVTKTENTTKEEEQSKSSDEAAKEEESHDEL. Residues 865–867 carry the Prevents secretion from ER motif; it reads DEL.

This sequence belongs to the heat shock protein 70 (TC 1.A.33) family. HSP110/SSE subfamily.

It is found in the endoplasmic reticulum lumen. The protein is Heat shock 70 kDa protein 17 (HSP70-17) of Arabidopsis thaliana (Mouse-ear cress).